A 315-amino-acid polypeptide reads, in one-letter code: MSLSIIFMGTPEFSVPTLRSLIDAGHKIRAVYTQPPRPGGRRGLDLQKSPVHQAAELLGLPVFTPVNFKDQEERQRFRELDADVAVVVAYGLLLPEAILTGTRLGCYNGHASLLPRWRGAAPIQRAIMAGDKKTGMMVMKMDKGLDTGPVALTREVEIGGTMTAGELHDKLMQAGAKAMAEAMNKLEYNELPLTEQPAEGVVYAAKIDKGETRIDFSKPAADVHNHIRGLSPFPGAWFEMEIAGKPERVKVLGSELAEGERAVGEVLSDDLAIACGSGAVRLTKLQKAGGKPMAAADFLRGTPVAAGTILALGPV.

112–115 (SLLP) serves as a coordination point for (6S)-5,6,7,8-tetrahydrofolate.

It belongs to the Fmt family.

It catalyses the reaction L-methionyl-tRNA(fMet) + (6R)-10-formyltetrahydrofolate = N-formyl-L-methionyl-tRNA(fMet) + (6S)-5,6,7,8-tetrahydrofolate + H(+). Functionally, attaches a formyl group to the free amino group of methionyl-tRNA(fMet). The formyl group appears to play a dual role in the initiator identity of N-formylmethionyl-tRNA by promoting its recognition by IF2 and preventing the misappropriation of this tRNA by the elongation apparatus. This chain is Methionyl-tRNA formyltransferase, found in Rhizobium rhizogenes (strain K84 / ATCC BAA-868) (Agrobacterium radiobacter).